Reading from the N-terminus, the 76-residue chain is Conotoxin VnMKLT2-013 (76 aa).

A signal peptide spans 1–23; sequence MMKLTCVLIIAVLFLTACQLTTA. Residues 24-42 constitute a propeptide that is removed on maturation; that stretch reads ETRDEYRAVRSSDEVQNSR. Residues 29-49 form a disordered region; sequence YRAVRSSDEVQNSRSTDDCST. 3 disulfide bridges follow: Cys47-Cys58, Cys52-Cys63, and Cys57-Cys72.

The protein belongs to the conotoxin O1 superfamily. In terms of tissue distribution, expressed by the venom duct.

Its subcellular location is the secreted. In Conus ventricosus (Mediterranean cone), this protein is Conotoxin VnMKLT2-013.